Here is a 213-residue protein sequence, read N- to C-terminus: Putative manganese efflux pump MntP (213 aa).

The next 6 membrane-spanning stretches (helical) occupy residues 3-23, 36-56, 67-87, 130-150, 152-172, and 187-207; these read ILSIVLTGFGLAMDAFAVSVA, ALKVALFFGGFQALMPLIGWG, AFDHWIAFILLSFIGGKMIFE, LAIATSIDALAVGVSFAFLGI, IVQTIIIIGIITFVLCFLGVI, and IVGGVILILIGINILLEHTGI.

This sequence belongs to the MntP (TC 9.B.29) family.

It localises to the cell membrane. Functionally, probably functions as a manganese efflux pump. This is Putative manganese efflux pump MntP from Clostridium perfringens (strain 13 / Type A).